The primary structure comprises 103 residues: Large ribosomal subunit protein uL24 (103 aa).

Belongs to the universal ribosomal protein uL24 family. As to quaternary structure, part of the 50S ribosomal subunit.

One of two assembly initiator proteins, it binds directly to the 5'-end of the 23S rRNA, where it nucleates assembly of the 50S subunit. In terms of biological role, one of the proteins that surrounds the polypeptide exit tunnel on the outside of the subunit. The polypeptide is Large ribosomal subunit protein uL24 (Brucella abortus (strain S19)).